The primary structure comprises 198 residues: Large ribosomal subunit protein uL13 (198 aa).

It belongs to the universal ribosomal protein uL13 family.

The sequence is that of Large ribosomal subunit protein uL13 (RPL13A) from Tetrahymena thermophila (strain SB210).